We begin with the raw amino-acid sequence, 338 residues long: MMDCDHLLRLGMTAKKILENGKGILAADETPKTLGRRFEKLGITNTEENRRKFREILFSTKGIERYIGGVILNQETFEQTSGSGVPLTELLKKKGIEIGIKLDKGLIDYKEKEKISVGLEDLDLRCKSSAFKDATFAKWRSLFYFYDGIPSEDCINENCSILAKYAIICQKNGLVPIVEPEVFLEGDYSMKRSYEVTRQILSTLMKYLNYELVYIPGVLIKASYVTSGQLSNEKYTPKKVATFTLRALLSTIPCGIPGIVFLSGGHGSEDAIGFLNAINMERGCRTWSLSFSFARALTDGVLETWRGDDSNIEEAQKILLETSFKACRGAEGKLWDQE.

2 residues coordinate substrate: arginine 50 and lysine 138. Glutamate 179 (proton acceptor) is an active-site residue. The Schiff-base intermediate with dihydroxyacetone-P role is filled by lysine 221.

This sequence belongs to the class I fructose-bisphosphate aldolase family.

The catalysed reaction is beta-D-fructose 1,6-bisphosphate = D-glyceraldehyde 3-phosphate + dihydroxyacetone phosphate. The protein operates within carbohydrate degradation; glycolysis; D-glyceraldehyde 3-phosphate and glycerone phosphate from D-glucose: step 4/4. This Encephalitozoon cuniculi (strain GB-M1) (Microsporidian parasite) protein is Fructose-bisphosphate aldolase.